The chain runs to 375 residues: Glutamate 5-kinase (375 aa).

Lys-17 provides a ligand contact to ATP. Ser-57, Asp-144, and Asn-156 together coordinate substrate. Residue 176-177 (TD) participates in ATP binding. One can recognise a PUA domain in the interval 283–361 (KGELILDTGA…DEIEGILGYV (79 aa)).

This sequence belongs to the glutamate 5-kinase family.

Its subcellular location is the cytoplasm. It carries out the reaction L-glutamate + ATP = L-glutamyl 5-phosphate + ADP. It participates in amino-acid biosynthesis; L-proline biosynthesis; L-glutamate 5-semialdehyde from L-glutamate: step 1/2. Its function is as follows. Catalyzes the transfer of a phosphate group to glutamate to form L-glutamate 5-phosphate. The protein is Glutamate 5-kinase of Thioalkalivibrio sulfidiphilus (strain HL-EbGR7).